Consider the following 166-residue polypeptide: Thiamine precursor transporter HmpT (166 aa).

The next 5 helical transmembrane spans lie at leucine 14–proline 34, glycine 35–phenylalanine 55, isoleucine 62–phenylalanine 82, phenylalanine 105–glycine 125, and tryptophan 126–leucine 146.

As to quaternary structure, in E.coli forms a stable energy-coupling factor (ECF) transporter complex composed of 2 membrane-embedded substrate-binding protein (S component), 2 ATP-binding proteins (A and A' components) and 2 transmembrane proteins (T component), probably with a stoichiometry of 2:1:1:2. May be able to interact with more than 1 S component at a time.

The protein resides in the cell membrane. Probably a thiamine precursor-binding protein that interacts with the energy-coupling factor (ECF) ABC-transporter complex. Unlike classic ABC transporters this ECF transporter provides the energy necessary to transport a number of different substrates. The substrates themselves are bound by transmembrane, not extracytoplasmic soluble proteins. This chain is Thiamine precursor transporter HmpT (hmpT), found in Lactococcus lactis subsp. cremoris (strain MG1363).